The chain runs to 470 residues: Sorting nexin-17 (470 aa).

The PX domain maps to 1–109; the sequence is MHFSIPETES…SFLRRAQQET (109 aa). Positions 36, 38, 62, and 75 each coordinate a 1,2-diacyl-sn-glycero-3-phospho-(1D-myo-inositol-3-phosphate). Residues 115 to 206 form the Ras-associating domain; the sequence is EEVSLEVLLS…YKIVLRKSYW (92 aa). The interval 115 to 432 is FERM-like; the sequence is EEVSLEVLLS…DATRESMVKL (318 aa). Residues 270–432 form a PTB-like F3 module region; it reads GYLRFDACVA…DATRESMVKL (163 aa). 7 positions are modified to phosphoserine: S336, S407, S409, S415, S421, S437, and S440. Positions 401-426 are disordered; the sequence is GGTLRRSDSQQAVKSPPLLESPDATR. Positions 458 to 470 are interacts with the retriever complex; it reads GNFAFEGIGDEDL.

The protein belongs to the sorting nexin family. In terms of assembly, monomer. Interacts with APP (via cytoplasmic YXNPXY motif). Interacts with KIF1B. Interacts with the C-termini of P-selectin, PTC, LDLR, VLDLR, LRP1 and LRP8. Interacts with KRIT1 (via N-terminus). Interacts with HRAS. Interacts with ITGB1 and ITGB5 (via NPxY motif). Interacts with CCDC22 and CCDC93; the interaction associates SNX17 with the CCC complex. Interacts (via C-terminus) with VPS26C and VPS35L; the interactions are direct and associate SNX17 with the retriever complex.

The protein resides in the cytoplasm. Its subcellular location is the early endosome. It is found in the cytoplasmic vesicle membrane. Functionally, critical regulator of endosomal recycling of numerous surface proteins, including integrins, signaling receptor and channels. Binds to NPxY sequences in the cytoplasmic tails of target cargos. Associates with retriever and CCC complexes to prevent lysosomal degradation and promote cell surface recycling of numerous cargos such as integrins ITGB1, ITGB5 and their associated alpha subunits. Also required for maintenance of normal cell surface levels of APP and LRP1. Interacts with membranes containing phosphatidylinositol 3-phosphate (PtdIns(3P)). The polypeptide is Sorting nexin-17 (SNX17) (Homo sapiens (Human)).